The following is an 812-amino-acid chain: Xaa-Pro dipeptidyl-peptidase (812 aa).

Active-site charge relay system residues include S372, D492, and H523.

This sequence belongs to the peptidase S15 family. As to quaternary structure, homodimer.

Its subcellular location is the cytoplasm. It catalyses the reaction Hydrolyzes Xaa-Pro-|- bonds to release unblocked, N-terminal dipeptides from substrates including Ala-Pro-|-p-nitroanilide and (sequentially) Tyr-Pro-|-Phe-Pro-|-Gly-Pro-|-Ile.. In terms of biological role, removes N-terminal dipeptides sequentially from polypeptides having unsubstituted N-termini provided that the penultimate residue is proline. The polypeptide is Xaa-Pro dipeptidyl-peptidase (Pediococcus pentosaceus (strain ATCC 25745 / CCUG 21536 / LMG 10740 / 183-1w)).